The chain runs to 187 residues: UPF0301 protein YqgE (187 aa).

Belongs to the UPF0301 (AlgH) family.

This chain is UPF0301 protein YqgE, found in Escherichia coli O127:H6 (strain E2348/69 / EPEC).